The sequence spans 441 residues: Ubiquitin carboxyl-terminal hydrolase MINDY-3 (441 aa).

Cys51 serves as the catalytic Nucleophile. Residue His284 is the Proton acceptor of the active site.

It belongs to the MINDY deubiquitinase family. FAM188 subfamily.

The protein localises to the nucleus. The catalysed reaction is Thiol-dependent hydrolysis of ester, thioester, amide, peptide and isopeptide bonds formed by the C-terminal Gly of ubiquitin (a 76-residue protein attached to proteins as an intracellular targeting signal).. Functionally, hydrolase that can remove 'Lys-48'-linked conjugated ubiquitin from proteins. This Xenopus tropicalis (Western clawed frog) protein is Ubiquitin carboxyl-terminal hydrolase MINDY-3 (mindy3).